The chain runs to 601 residues: Putative ankyrin repeat protein R841 (601 aa).

ANK repeat units lie at residues Asn17–Ala50, His54–His86, Gln91–Tyr123, Arg165–His197, Tyr201–Ser234, Lys238–Ser269, Asn274–Asn310, Lys314–Ser349, Val361–Ser390, Thr397–Ile427, Tyr432–Ile463, and Ile467–Cys500.

This Acanthamoeba polyphaga mimivirus (APMV) protein is Putative ankyrin repeat protein R841.